A 319-amino-acid polypeptide reads, in one-letter code: uncharacterized protein (319 aa).

The region spanning 29 to 164 is the MPN domain; sequence VNISSLALLK…LDAFRSVNPL (136 aa). Positions 111, 113, and 124 each coordinate Zn(2+). Residues 111–124 carry the JAMM motif motif; sequence HSHPGFGCWLSSVD.

Belongs to the peptidase M67A family.

This is an uncharacterized protein from Caenorhabditis elegans.